The sequence spans 514 residues: Triacylglyceride transporter MAB_2807 (514 aa).

11 helical membrane passes run 19 to 39 (IAIGAGSLAVLLGALDTYVVV), 58 to 78 (QVTPIVTGYLLGYIAAMPLLG), 88 to 108 (LILQLALAGFAIGSVITALST), 118 to 138 (VIQGVASGALLPVTLALGADL), 157 to 177 (LGSVLGPLYGVLCVWLFGSWT), 178 to 198 (AIFWVNVPLAIIAIVLVQFSV), 210 to 230 (VDVVGGALLAVALGLLVVGLY), 239 to 259 (LPEWALPVLSGSGVAFLAFIL), 278 to 298 (PFFAALAASLAAGAALMVTLV), 316 to 336 (VFLLSRFLVALPIGAVIGGWL), and 344 to 364 (IIAVIGMLIAAFGYYLISGWP). Residues 371 to 380 (VHNFGFFTLP) form a beta-hairpin region. 3 consecutive transmembrane segments (helical) span residues 385 to 405 (DLVVAGIGLGLVIGPLSSAAL), 420 to 440 (VVVARMTGMLIGMAALGGWGI), and 485 to 505 (MFAITAVVCVIAAVIAIFVGS).

The protein belongs to the major facilitator superfamily. P55 (TC 2.A.1.3.34) family.

The protein resides in the cell inner membrane. In association with lipoprotein LprG probably transports triacyglycerides (TAG) across the inner cell membrane into the periplasm; TAG probably regulates lipid metabolism and growth regulation and plays a structural role in the outer membrane. TAG (and maybe other lipids) enters the central cavity of the P55 transporter from within the cell inner membrane via clefts on the cytoplasmic face of P55 between TM5-TM8 and TM2-TM11. From there the lipid is probably transferred to the hydrophobic cavity of LprG. Involved in drug susceptibilty, its expression partially complements the antibiotic susceptibilty of a double lprG-mfs deletion. Probably does not function as a bona fide drug efflux pump, but instead plays a role in outer membrane biogenesis. Probably required with LprG for normal surface localization of lipoarabinomannan (LAM). This Mycobacteroides abscessus (strain ATCC 19977 / DSM 44196 / CCUG 20993 / CIP 104536 / JCM 13569 / NCTC 13031 / TMC 1543 / L948) (Mycobacterium abscessus) protein is Triacylglyceride transporter MAB_2807.